Consider the following 219-residue polypeptide: Protein DMP5 (219 aa).

Residues 1–24 (MSALRLRNANTPAPELDELSDQTP) form a disordered region. 4 consecutive transmembrane segments (helical) span residues 51-71 (LSNLLPTGTLLAFQLLTPVFT), 82-102 (FLTAVLLFLLAASCFVSSFTD), 142-162 (MRFVDWIHATLSVLVFGAVAL), and 182-202 (VLDIVPVGVGVMCSLLFMVFP).

It belongs to the plant DMP1 protein family.

It is found in the endoplasmic reticulum membrane. Involved in membrane remodeling. The polypeptide is Protein DMP5 (Arabidopsis thaliana (Mouse-ear cress)).